The chain runs to 316 residues: MINFNNVKIFSGNSNLELAKKIAEKAGLQLGKAEIQRFKDGEVYIEIEETVRGRDVFVVQSTSEPVNENLMELLIFVDALKRASAKTINVIIPYYGYARQDRKSKPREPITSKLVANLLTTAGVNRVVAMDLHADQIQGFFDIPLDHMQALPLMARYFKEKGFKGDEVVVVSPDVGGVKRARKLAEKLDCKIAIIDKRRPKPNMSEVMNLIGEVEGKIAIFIDDMIDTAGTITNGADAIAQRGAKEVYACCTHAVFSDPAIERLEKSVLKEIVITDSIALPERKKIDKIKILSVDSVFANAIDRITNNQSVSELFN.

ATP is bound by residues 40–42 (DGE) and 99–100 (RQ). 2 residues coordinate Mg(2+): His-133 and Asp-174. Residue Lys-197 is part of the active site. Residues Arg-199, Asp-223, and 227–231 (DTAGT) each bind D-ribose 5-phosphate.

The protein belongs to the ribose-phosphate pyrophosphokinase family. Class I subfamily. In terms of assembly, homohexamer. Mg(2+) serves as cofactor.

The protein localises to the cytoplasm. It carries out the reaction D-ribose 5-phosphate + ATP = 5-phospho-alpha-D-ribose 1-diphosphate + AMP + H(+). It participates in metabolic intermediate biosynthesis; 5-phospho-alpha-D-ribose 1-diphosphate biosynthesis; 5-phospho-alpha-D-ribose 1-diphosphate from D-ribose 5-phosphate (route I): step 1/1. In terms of biological role, involved in the biosynthesis of the central metabolite phospho-alpha-D-ribosyl-1-pyrophosphate (PRPP) via the transfer of pyrophosphoryl group from ATP to 1-hydroxyl of ribose-5-phosphate (Rib-5-P). This Fusobacterium nucleatum subsp. nucleatum (strain ATCC 25586 / DSM 15643 / BCRC 10681 / CIP 101130 / JCM 8532 / KCTC 2640 / LMG 13131 / VPI 4355) protein is Ribose-phosphate pyrophosphokinase.